The following is a 644-amino-acid chain: Exoribonuclease 2 (644 aa).

Positions 189-516 (RRDLTALDFV…NHRLLKAIIK (328 aa)) constitute an RNB domain. An S1 motif domain is found at 561–643 (DTRFAAEILD…ETRSIIARPA (83 aa)).

It belongs to the RNR ribonuclease family. RNase II subfamily.

The protein resides in the cytoplasm. The catalysed reaction is Exonucleolytic cleavage in the 3'- to 5'-direction to yield nucleoside 5'-phosphates.. Its function is as follows. Involved in mRNA degradation. Hydrolyzes single-stranded polyribonucleotides processively in the 3' to 5' direction. This Klebsiella pneumoniae (strain 342) protein is Exoribonuclease 2.